Reading from the N-terminus, the 480-residue chain is Protein disulfide-isomerase 5-4 (480 aa).

Residues Asn-74 and Asn-99 are each glycosylated (N-linked (GlcNAc...) asparagine). The region spanning 120 to 263 (FHAGEVLSLI…LVKMVVSLVE (144 aa)) is the Thioredoxin domain. Active-site nucleophile residues include Cys-170 and Cys-173. Cys-170 and Cys-173 are joined by a disulfide. N-linked (GlcNAc...) asparagine glycosylation is found at Asn-280, Asn-326, and Asn-376. Residues 439 to 459 (FSHFITNVCAIIGGVFTVAGI) form a helical membrane-spanning segment.

This sequence belongs to the protein disulfide isomerase family. As to expression, widely expressed.

It is found in the membrane. Acts as a protein-folding catalyst that interacts with nascent polypeptides to catalyze the formation, isomerization, and reduction or oxidation of disulfide bonds. The protein is Protein disulfide-isomerase 5-4 (PDIL5-4) of Arabidopsis thaliana (Mouse-ear cress).